A 491-amino-acid polypeptide reads, in one-letter code: Probable malate:quinone oxidoreductase (491 aa).

It belongs to the MQO family. The cofactor is FAD.

The enzyme catalyses (S)-malate + a quinone = a quinol + oxaloacetate. It participates in carbohydrate metabolism; tricarboxylic acid cycle; oxaloacetate from (S)-malate (quinone route): step 1/1. The protein is Probable malate:quinone oxidoreductase of Actinobacillus pleuropneumoniae serotype 5b (strain L20).